The sequence spans 363 residues: Transcription factor PIF6 (363 aa).

2 disordered regions span residues 154-204 and 340-363; these read SEGS…RNDI and IPNP…KTNR. Basic residues predominate over residues 178–188; sequence RTRKALVKRKR. In terms of domain architecture, bHLH spans 188–237; it reads RNAEAYNSPERNQRNDINKKMRTLQNLLPNSHKDDNESMLDEAINYMTNL. Residues 340-350 show a composition bias toward polar residues; the sequence is IPNPNSLSNLD. A compositionally biased stretch (basic residues) spans 354 to 363; it reads LHKKSRKTNR.

As to quaternary structure, homodimer. Interacts with APRR1/TOC1. Binds to RGL2 and RGA. Associates to PTAC12/HMR/PAP5 which acts as a transcriptional coactivator. As to expression, mainly expressed in fruits and flowers and, to a lower extent, in leaves, stems, seedlings and roots.

It localises to the nucleus. Functionally, transcription factor. The chain is Transcription factor PIF6 from Arabidopsis thaliana (Mouse-ear cress).